The primary structure comprises 122 residues: Large ribosomal subunit protein uL18 (122 aa).

Belongs to the universal ribosomal protein uL18 family. As to quaternary structure, part of the 50S ribosomal subunit; part of the 5S rRNA/L5/L18/L25 subcomplex. Contacts the 5S and 23S rRNAs.

Functionally, this is one of the proteins that bind and probably mediate the attachment of the 5S RNA into the large ribosomal subunit, where it forms part of the central protuberance. The sequence is that of Large ribosomal subunit protein uL18 from Mycobacterium avium (strain 104).